Here is a 774-residue protein sequence, read N- to C-terminus: Ion-translocating oxidoreductase complex subunit C (774 aa).

2 consecutive 4Fe-4S ferredoxin-type domains span residues 359-389 (ELPEPVPAMPCIRCGDCAQVCPVSLLPQQLH) and 399-428 (QLLAHNLFDCIECGACAYVCPSSIPLVQYY). [4Fe-4S] cluster-binding residues include cysteine 369, cysteine 372, cysteine 375, cysteine 379, cysteine 408, cysteine 411, cysteine 414, and cysteine 418. Over residues 453 to 490 (EQRQARLRRDEERRAAERAQRAEKAALARAAQAEREEA) the composition is skewed to basic and acidic residues. Positions 453–493 (EQRQARLRRDEERRAAERAQRAEKAALARAAQAEREEAAPA) are disordered.

It belongs to the 4Fe4S bacterial-type ferredoxin family. RnfC subfamily. In terms of assembly, the complex is composed of six subunits: RnfA, RnfB, RnfC, RnfD, RnfE and RnfG. [4Fe-4S] cluster is required as a cofactor.

Its subcellular location is the cell inner membrane. Functionally, part of a membrane-bound complex that couples electron transfer with translocation of ions across the membrane. This is Ion-translocating oxidoreductase complex subunit C from Pseudomonas aeruginosa (strain ATCC 15692 / DSM 22644 / CIP 104116 / JCM 14847 / LMG 12228 / 1C / PRS 101 / PAO1).